The following is a 403-amino-acid chain: Argininosuccinate synthase (403 aa).

ATP is bound by residues 13 to 21 and alanine 40; that span reads AYSGGLDTS. The L-citrulline site is built by tyrosine 92 and serine 97. Glycine 122 contacts ATP. Threonine 124, asparagine 128, and aspartate 129 together coordinate L-aspartate. Position 128 (asparagine 128) interacts with L-citrulline. L-citrulline is bound by residues arginine 132, serine 181, serine 190, glutamate 266, and tyrosine 278.

This sequence belongs to the argininosuccinate synthase family. Type 1 subfamily. Homotetramer.

It is found in the cytoplasm. The enzyme catalyses L-citrulline + L-aspartate + ATP = 2-(N(omega)-L-arginino)succinate + AMP + diphosphate + H(+). Its pathway is amino-acid biosynthesis; L-arginine biosynthesis; L-arginine from L-ornithine and carbamoyl phosphate: step 2/3. This Aliivibrio salmonicida (strain LFI1238) (Vibrio salmonicida (strain LFI1238)) protein is Argininosuccinate synthase.